The chain runs to 245 residues: 1-(5-phosphoribosyl)-5-[(5-phosphoribosylamino)methylideneamino] imidazole-4-carboxamide isomerase (245 aa).

D7 acts as the Proton acceptor in catalysis. D129 functions as the Proton donor in the catalytic mechanism.

This sequence belongs to the HisA/HisF family.

The protein resides in the cytoplasm. The catalysed reaction is 1-(5-phospho-beta-D-ribosyl)-5-[(5-phospho-beta-D-ribosylamino)methylideneamino]imidazole-4-carboxamide = 5-[(5-phospho-1-deoxy-D-ribulos-1-ylimino)methylamino]-1-(5-phospho-beta-D-ribosyl)imidazole-4-carboxamide. It functions in the pathway amino-acid biosynthesis; L-histidine biosynthesis; L-histidine from 5-phospho-alpha-D-ribose 1-diphosphate: step 4/9. In Escherichia coli O9:H4 (strain HS), this protein is 1-(5-phosphoribosyl)-5-[(5-phosphoribosylamino)methylideneamino] imidazole-4-carboxamide isomerase.